A 367-amino-acid polypeptide reads, in one-letter code: 2-aminoethylphosphonate--pyruvate transaminase (367 aa).

An N6-(pyridoxal phosphate)lysine modification is found at lysine 193.

The protein belongs to the class-V pyridoxal-phosphate-dependent aminotransferase family. PhnW subfamily. Homodimer. The cofactor is pyridoxal 5'-phosphate.

It carries out the reaction (2-aminoethyl)phosphonate + pyruvate = phosphonoacetaldehyde + L-alanine. Its function is as follows. Involved in phosphonate degradation. This Vibrio vulnificus (strain YJ016) protein is 2-aminoethylphosphonate--pyruvate transaminase.